The chain runs to 455 residues: tRNA modification GTPase MnmE (455 aa).

The (6S)-5-formyl-5,6,7,8-tetrahydrofolate site is built by R25, E85, and R124. Residues 221–375 (GLSTAIIGRP…IEERINKLFF (155 aa)) enclose the TrmE-type G domain. N231 contacts K(+). GTP contacts are provided by residues 231–236 (NVGKSS), 250–256 (TDIEGTT), and 275–278 (DTAG). Residue S235 participates in Mg(2+) binding. 3 residues coordinate K(+): T250, I252, and T255. T256 is a binding site for Mg(2+). K455 contacts (6S)-5-formyl-5,6,7,8-tetrahydrofolate.

It belongs to the TRAFAC class TrmE-Era-EngA-EngB-Septin-like GTPase superfamily. TrmE GTPase family. Homodimer. Heterotetramer of two MnmE and two MnmG subunits. It depends on K(+) as a cofactor.

It is found in the cytoplasm. Exhibits a very high intrinsic GTPase hydrolysis rate. Involved in the addition of a carboxymethylaminomethyl (cmnm) group at the wobble position (U34) of certain tRNAs, forming tRNA-cmnm(5)s(2)U34. In Streptococcus mutans serotype c (strain ATCC 700610 / UA159), this protein is tRNA modification GTPase MnmE.